A 255-amino-acid chain; its full sequence is Glutamate racemase (255 aa).

Substrate-binding positions include D7 to S8 and Y39 to G40. C70 functions as the Proton donor/acceptor in the catalytic mechanism. Substrate is bound at residue N71–T72. C181 serves as the catalytic Proton donor/acceptor. Residue T182–H183 participates in substrate binding.

This sequence belongs to the aspartate/glutamate racemases family.

It catalyses the reaction L-glutamate = D-glutamate. It functions in the pathway cell wall biogenesis; peptidoglycan biosynthesis. Its function is as follows. Provides the (R)-glutamate required for cell wall biosynthesis. The protein is Glutamate racemase of Helicobacter pylori (strain P12).